Consider the following 354-residue polypeptide: Putative Xaa-Pro aminopeptidase (354 aa).

Mn(2+)-binding residues include D213, D224, H290, E319, and E333.

The protein belongs to the peptidase M24B family. It depends on Mn(2+) as a cofactor.

It catalyses the reaction Release of any N-terminal amino acid, including proline, that is linked to proline, even from a dipeptide or tripeptide.. The chain is Putative Xaa-Pro aminopeptidase (pepP) from Mycoplasma pneumoniae (strain ATCC 29342 / M129 / Subtype 1) (Mycoplasmoides pneumoniae).